Reading from the N-terminus, the 452-residue chain is MESNQKCGATQIVNEFCESIEGIVFRKGSEEYKQNVNKRWNIDVVNTPLLIVYPKNIQDVVKAVNFSRECQLDFAVIAGAHGFKSTCDNGLLLNISSMKNIKVDEASKTVVVETGCTLGDLDKETSKFGLGIPSGHVSHTGLGGLTLGGGIGHLSRSLGLTSDNLIGCTLVNYKGEIEKVTDQSNKELIYAIRGAGSNFGVITDFTFKLHPVKDVYLGTFVYPHATSKEPLTLLGEYASSKDVPNELSCAISITPEGVVVMAIYNGTEEQGKPYIEKIASFGVPVVSKISMIPYVQLQCLIDNKVPHGLKYYQRGPFIKEALNADMIEIILDAYNKHPTKSCAILLTHLGGKVREPVEDDFSSFAHRNSEYQIIFASIIPSDQDKPSIKQWTADVHTKLMPYCFGDYSNTTDGTQPIEIIYGKHTNKLIQLKTKYDPLNFFKNNTNIKPIQN.

The FAD-binding PCMH-type domain maps to 44–212; the sequence is VVNTPLLIVY…TDFTFKLHPV (169 aa). Histidine 81 carries the post-translational modification Pros-8alpha-FAD histidine.

The protein belongs to the oxygen-dependent FAD-linked oxidoreductase family. It depends on FAD as a cofactor.

In Dictyostelium discoideum (Social amoeba), this protein is FAD-linked oxidoreductase DDB_G0289697.